Consider the following 118-residue polypeptide: MSSKNKIIQELENEQLKQELPEFSPGDTVVVQVKVTEGNRERLQAYEGVVIGIRNRGLNSAFTVRKISHGVGVERTFQTHSKQVESITVKRRGDVRQAKLYYLRELTGKAARIKEKLN.

This sequence belongs to the bacterial ribosomal protein bL19 family.

This protein is located at the 30S-50S ribosomal subunit interface and may play a role in the structure and function of the aminoacyl-tRNA binding site. This Teredinibacter turnerae (strain ATCC 39867 / T7901) protein is Large ribosomal subunit protein bL19.